Consider the following 289-residue polypeptide: Serine/threonine-protein phosphatase Pgam5, mitochondrial (289 aa).

Residues Phe-7 to Leu-23 traverse the membrane as a helical segment.

The protein belongs to the phosphoglycerate mutase family. BPG-dependent PGAM subfamily. Interacts with Pk92B/ASK1.

It localises to the mitochondrion outer membrane. The enzyme catalyses O-phospho-L-seryl-[protein] + H2O = L-seryl-[protein] + phosphate. It carries out the reaction O-phospho-L-threonyl-[protein] + H2O = L-threonyl-[protein] + phosphate. In terms of biological role, displays phosphatase activity for serine/threonine residues, and dephosphorylates and activates Pk92B kinase. Has apparently no phosphoglycerate mutase activity. The polypeptide is Serine/threonine-protein phosphatase Pgam5, mitochondrial (Pgam5) (Drosophila melanogaster (Fruit fly)).